Reading from the N-terminus, the 202-residue chain is Protein DEHYDRATION-INDUCED 19 homolog 5 (202 aa).

Positions 88-97 (SHLLKRRKPS) are enriched in basic residues. The segment at 88–120 (SHLLKRRKPSRPSSSWPTPSNNSDPYFEGPPQY) is disordered. Residues 98–112 (RPSSSWPTPSNNSDP) are compositionally biased toward low complexity.

The protein belongs to the Di19 family.

The sequence is that of Protein DEHYDRATION-INDUCED 19 homolog 5 (DI19-5) from Oryza sativa subsp. japonica (Rice).